The primary structure comprises 81 residues: Small ribosomal subunit protein bS16 (81 aa).

It belongs to the bacterial ribosomal protein bS16 family.

This Caldicellulosiruptor bescii (strain ATCC BAA-1888 / DSM 6725 / KCTC 15123 / Z-1320) (Anaerocellum thermophilum) protein is Small ribosomal subunit protein bS16.